The primary structure comprises 121 residues: Small ribosomal subunit protein uS13 (121 aa).

Residues 92 to 121 form a disordered region; it reads RRGLPVRGQKTKNNSRTRKGPRKTMANKKK.

Belongs to the universal ribosomal protein uS13 family. Part of the 30S ribosomal subunit. Forms a loose heterodimer with protein S19. Forms two bridges to the 50S subunit in the 70S ribosome.

Its function is as follows. Located at the top of the head of the 30S subunit, it contacts several helices of the 16S rRNA. In the 70S ribosome it contacts the 23S rRNA (bridge B1a) and protein L5 of the 50S subunit (bridge B1b), connecting the 2 subunits; these bridges are implicated in subunit movement. Contacts the tRNAs in the A and P-sites. The polypeptide is Small ribosomal subunit protein uS13 (Oceanobacillus iheyensis (strain DSM 14371 / CIP 107618 / JCM 11309 / KCTC 3954 / HTE831)).